A 1022-amino-acid polypeptide reads, in one-letter code: Protein translocase subunit SecA (1022 aa).

ATP contacts are provided by residues Q143, 161–165, and D661; that span reads GEGKT. Residues 973 to 1001 are disordered; the sequence is AGSILSHESDVPSGTAAQQPIKADVKPGR. C1005, C1007, C1016, and H1017 together coordinate Zn(2+).

The protein belongs to the SecA family. As to quaternary structure, monomer and homodimer. Part of the essential Sec protein translocation apparatus which comprises SecA, SecYEG and auxiliary proteins SecDF. Other proteins may also be involved. It depends on Zn(2+) as a cofactor.

The protein localises to the cell inner membrane. The protein resides in the cytoplasm. It catalyses the reaction ATP + H2O + cellular proteinSide 1 = ADP + phosphate + cellular proteinSide 2.. In terms of biological role, part of the Sec protein translocase complex. Interacts with the SecYEG preprotein conducting channel. Has a central role in coupling the hydrolysis of ATP to the transfer of proteins into and across the cell membrane, serving as an ATP-driven molecular motor driving the stepwise translocation of polypeptide chains across the membrane. This Chlorobium phaeobacteroides (strain DSM 266 / SMG 266 / 2430) protein is Protein translocase subunit SecA.